Consider the following 182-residue polypeptide: Large ribosomal subunit protein uL16 (182 aa).

This sequence belongs to the universal ribosomal protein uL16 family.

This is Large ribosomal subunit protein uL16 from Pyrobaculum islandicum (strain DSM 4184 / JCM 9189 / GEO3).